The chain runs to 349 residues: MIKRRQTRRIYVGGVSIGDGAPVRVQSMTKTDTRNIKATIRQIKQLELAGCEIVRVAVPDITAAKVLGEIKKRIKIPMIADIHFNYKLALEAIKQGVDGLRINPGNIGAKWKVREVITAAKDRKIPIRIGVNAGSLPKDLIEKYGHPTHEAMVEAAERHIEILEELDFHDIKVSLKASDVMKTVEAYRLFSSKHDYPLHIGITETGPVPEGVVKSSIGIGLLLLEGIGDTIRVSLTDSPVVEVNVAYEILRVTGFREKGVEIISCPTCGRCEVNIKKMVKQVKNALRNVKEPIKVAVMGCSVNGPGEAKEADFGIAGGKGQGIVFVKGKILKTVKETELVNALIEEIRK.

[4Fe-4S] cluster is bound by residues C265, C268, C300, and E307.

This sequence belongs to the IspG family. It depends on [4Fe-4S] cluster as a cofactor.

It catalyses the reaction (2E)-4-hydroxy-3-methylbut-2-enyl diphosphate + oxidized [flavodoxin] + H2O + 2 H(+) = 2-C-methyl-D-erythritol 2,4-cyclic diphosphate + reduced [flavodoxin]. It participates in isoprenoid biosynthesis; isopentenyl diphosphate biosynthesis via DXP pathway; isopentenyl diphosphate from 1-deoxy-D-xylulose 5-phosphate: step 5/6. Converts 2C-methyl-D-erythritol 2,4-cyclodiphosphate (ME-2,4cPP) into 1-hydroxy-2-methyl-2-(E)-butenyl 4-diphosphate. The sequence is that of 4-hydroxy-3-methylbut-2-en-1-yl diphosphate synthase (flavodoxin) from Thermodesulfovibrio yellowstonii (strain ATCC 51303 / DSM 11347 / YP87).